A 456-amino-acid chain; its full sequence is 26S proteasome non-ATPase regulatory subunit 12 (456 aa).

Ala2 is modified (N-acetylalanine). Lys92 participates in a covalent cross-link: Glycyl lysine isopeptide (Lys-Gly) (interchain with G-Cter in SUMO1); alternate. A Glycyl lysine isopeptide (Lys-Gly) (interchain with G-Cter in SUMO2); alternate cross-link involves residue Lys92. 2 positions are modified to N6-acetyllysine: Lys221 and Lys368. One can recognise a PCI domain in the interval 242–420 (SICKHYRAIY…GIINFQRPKD (179 aa)).

Belongs to the proteasome subunit p55 family. Component of the 19S proteasome regulatory particle complex. The 26S proteasome consists of a 20S core particle (CP) and two 19S regulatory subunits (RP). The regulatory particle is made of a lid composed of 9 subunits including PSMD12, a base containing 6 ATPases and few additional components. Interacts with ERCC6.

Component of the 26S proteasome, a multiprotein complex involved in the ATP-dependent degradation of ubiquitinated proteins. This complex plays a key role in the maintenance of protein homeostasis by removing misfolded or damaged proteins, which could impair cellular functions, and by removing proteins whose functions are no longer required. Therefore, the proteasome participates in numerous cellular processes, including cell cycle progression, apoptosis, or DNA damage repair. In Homo sapiens (Human), this protein is 26S proteasome non-ATPase regulatory subunit 12 (PSMD12).